A 336-amino-acid chain; its full sequence is UPF0284 protein PYRAB00380 (336 aa).

Belongs to the UPF0284 family.

In Pyrococcus abyssi (strain GE5 / Orsay), this protein is UPF0284 protein PYRAB00380.